The chain runs to 452 residues: Pup--protein ligase (452 aa).

Glutamate 9 serves as a coordination point for Mg(2+). Arginine 53 provides a ligand contact to ATP. Tyrosine 55 serves as a coordination point for Mg(2+). The active-site Proton acceptor is aspartate 57. Residue glutamate 63 participates in Mg(2+) binding. Positions 66 and 419 each coordinate ATP.

This sequence belongs to the Pup ligase/Pup deamidase family. Pup-conjugating enzyme subfamily.

The enzyme catalyses ATP + [prokaryotic ubiquitin-like protein]-L-glutamate + [protein]-L-lysine = ADP + phosphate + N(6)-([prokaryotic ubiquitin-like protein]-gamma-L-glutamyl)-[protein]-L-lysine.. It participates in protein degradation; proteasomal Pup-dependent pathway. It functions in the pathway protein modification; protein pupylation. Its function is as follows. Catalyzes the covalent attachment of the prokaryotic ubiquitin-like protein modifier Pup to the proteasomal substrate proteins, thereby targeting them for proteasomal degradation. This tagging system is termed pupylation. The ligation reaction involves the side-chain carboxylate of the C-terminal glutamate of Pup and the side-chain amino group of a substrate lysine. In Parafrankia sp. (strain EAN1pec), this protein is Pup--protein ligase.